The following is a 562-amino-acid chain: Adenylate kinase isoenzyme 5 (562 aa).

Adenylate kinase stretches follow at residues 133–316 (KIIL…MAVD) and 377–559 (KIIF…TAID). 142 to 147 (GSGKGT) is an ATP binding site. Residues 162-193 (SVGELLRKKIHSTSSNRKWSLIAKIITTGELA) form an NMP 1 region. Residues arginine 168, 191–193 (ELA), 219–222 (GFPR), and glutamine 226 contribute to the AMP site. The LID 1 stretch occupies residues 256–266 (KRAEQQGRPDD). Arginine 257 is an ATP binding site. AMP contacts are provided by arginine 263 and arginine 274. 386–391 (GSGKGT) provides a ligand contact to ATP. The interval 406–435 (STGELLREELASESERSKLIRDIMERGDLV) is NMP 2. AMP is bound by residues threonine 407, arginine 412, 433-435 (DLV), 462-465 (GYPR), and glutamine 469. Residues 499–509 (QRSRSSLPVDD) form an LID 2 region. Arginine 500 contributes to the ATP binding site. Position 517 (arginine 517) interacts with AMP. Glycine 545 lines the ATP pocket.

It belongs to the adenylate kinase family. In terms of assembly, monomer. Interacts with YWHAZ. In terms of tissue distribution, brain specific.

It is found in the cytoplasm. The enzyme catalyses AMP + ATP = 2 ADP. It carries out the reaction a 2'-deoxyribonucleoside 5'-diphosphate + ATP = a 2'-deoxyribonucleoside 5'-triphosphate + ADP. The catalysed reaction is a ribonucleoside 5'-diphosphate + ATP = a ribonucleoside 5'-triphosphate + ADP. Nucleoside monophosphate (NMP) kinase that catalyzes the reversible transfer of the terminal phosphate group between nucleoside triphosphates and monophosphates. Active on AMP and dAMP with ATP as a donor. When GTP is used as phosphate donor, the enzyme phosphorylates AMP, CMP, and to a small extent dCMP. Also displays broad nucleoside diphosphate kinase activity. This chain is Adenylate kinase isoenzyme 5 (AK5), found in Homo sapiens (Human).